A 442-amino-acid chain; its full sequence is Alpha-1,6-mannosyl-glycoprotein 2-beta-N-acetylglucosaminyltransferase (442 aa).

Residues 1 to 9 are Cytoplasmic-facing; it reads MRFRIYKRK. Residues 10–29 traverse the membrane as a helical; Signal-anchor for type II membrane protein segment; that stretch reads VLILTLVVAACGFVLWSSNG. Over 30–442 the chain is Lumenal; it reads RQRKNDALAP…ELCKSYRRLQ (413 aa). N-linked (GlcNAc...) asparagine glycosylation is found at asparagine 64 and asparagine 81. Residues 118–122 and aspartate 149 contribute to the substrate site; that span reads QVHNR. Cysteine 191 and cysteine 205 form a disulfide bridge. Residue 224 to 228 coordinates substrate; sequence QTKHH. Aspartate 256 is a binding site for Mn(2+). The cysteines at positions 278 and 281 are disulfide-linked. Arginine 293 provides a ligand contact to substrate. 3 cysteine pairs are disulfide-bonded: cysteine 329–cysteine 352, cysteine 334–cysteine 435, and cysteine 373–cysteine 381. Histidine 369 lines the Mn(2+) pocket.

Belongs to the glycosyltransferase 16 (GT16) protein family. Homodimer. Mn(2+) serves as cofactor. In terms of tissue distribution, detected in liver (at protein level). Detected in liver, brain, thymus and spleen.

The protein resides in the golgi apparatus membrane. The enzyme catalyses an N(4)-{beta-D-GlcNAc-(1-&gt;2)-alpha-D-Man-(1-&gt;3)-[alpha-D-Man-(1-&gt;6)]-beta-D-Man-(1-&gt;4)-beta-D-GlcNAc-(1-&gt;4)-beta-D-GlcNAc}-L-asparaginyl-[protein] + UDP-N-acetyl-alpha-D-glucosamine = N(4)-{beta-D-GlcNAc-(1-&gt;2)-alpha-D-Man-(1-&gt;3)-[beta-D-GlcNAc-(1-&gt;2)-alpha-D-Man-(1-&gt;6)]-beta-D-Man-(1-&gt;4)-beta-D-GlcNAc-(1-&gt;4)-beta-D-GlcNAc}-L-asparaginyl-[protein] + UDP + H(+). Its pathway is protein modification; protein glycosylation. Its function is as follows. Plays an essential role in protein N-glycosylation. Catalyzes the transfer of N-acetylglucosamine (GlcNAc) onto the free terminal mannose moiety in the core structure of the nascent N-linked glycan chain, giving rise to the second branch in complex glycans. This Rattus norvegicus (Rat) protein is Alpha-1,6-mannosyl-glycoprotein 2-beta-N-acetylglucosaminyltransferase (Mgat2).